The following is a 182-amino-acid chain: MGDEEKRNRAITARRQHLKSVMLQIAATELEKEESRRESEKENYLSEHCPPLHIPGSMSEVQELCKQLHAKIDVAEEEKYDMEVKVQKSSKELEDMNQKLFDLRGKFKRPPLRRVRMSADAMLKALLGSKHKVCMDLRANLKQVKKEDTEKERDLRDVGDWRKNIEEKSGMEGRKKMFESES.

G2 bears the N-acetylglycine mark. The interval 2-48 (GDEEKRNRAITARRQHLKSVMLQIAATELEKEESRRESEKENYLSEH) is involved in binding TNC. T12 carries the phosphothreonine modification. Basic and acidic residues predominate over residues 29 to 45 (ELEKEESRRESEKENYL). The segment at 29–53 (ELEKEESRRESEKENYLSEHCPPLH) is disordered. Residues 97 to 117 (NQKLFDLRGKFKRPPLRRVRM) are involved in binding TNC and actin. S118 is subject to Phosphoserine.

It belongs to the troponin I family. Binds to actin and tropomyosin.

Its function is as follows. Troponin I is the inhibitory subunit of troponin, the thin filament regulatory complex which confers calcium-sensitivity to striated muscle actomyosin ATPase activity. The polypeptide is Troponin I, fast skeletal muscle (Tnni2) (Mus musculus (Mouse)).